The sequence spans 623 residues: Chaperone protein dnaK (623 aa).

The interval 598 to 623 (TPDAGAEGGAAPSQDDAIETDFSTEK) is disordered.

Belongs to the heat shock protein 70 family.

The protein resides in the plastid. It is found in the chloroplast. In terms of biological role, acts as a chaperone. The protein is Chaperone protein dnaK of Emiliania huxleyi (Coccolithophore).